The following is a 337-amino-acid chain: ERI1 exoribonuclease 3 (337 aa).

Residues F146–M320 enclose the Exonuclease domain. Mg(2+) contacts are provided by D150, E152, and D249. The active-site Proton acceptor is E152. E152 is an AMP binding site. H307 serves as the catalytic Proton acceptor. Residue H307 participates in AMP binding. D312 contributes to the Mg(2+) binding site.

As to quaternary structure, interacts with PRNP. Requires Mg(2+) as cofactor. In terms of tissue distribution, highly expressed in the brain, heart, thyroid and testis. Expressed at low levels in the muscle cells, liver, pancreas and kidney.

This is ERI1 exoribonuclease 3 (Eri3) from Mus musculus (Mouse).